Reading from the N-terminus, the 155-residue chain is Myelin basic protein (155 aa).

A disordered region spans residues 1–72 (MASATTSDHA…HQGARRQTDD (72 aa)). The residue at position 2 (A2) is an N-acetylalanine; in forms C1, C2, C3 and C8. Deamidated glutamine; in forms C1, C2 and C3 is present on Q12. The span at 37 to 49 (GSRKVPEKGKEPA) shows a compositional bias: basic and acidic residues. 2 positions are modified to phosphoserine; in forms C1, C2 and C3: S73 and S84. The interval 113-155 (RAHYGAAGSSKSKDGFRGRRDGSGTLSSFFKMGKKGEGSPARR) is disordered. Phosphoserine; in forms C1 and C3 occurs at positions 121 and 122. Over residues 123 to 134 (KSKDGFRGRRDG) the composition is skewed to basic and acidic residues. Phosphoserine; in forms C1, C2 and C3 occurs at positions 135, 139, and 140.

Belongs to the myelin basic protein family. Post-translationally, several charge isomers are produced as a result of optional post-translational modifications, such as phosphorylation, deamidation and citrullination. Dogfish MBP contains four major components designated as C1, C2, C3 and C8. C1 and C3, but not C2 are phosphorylated at either Ser-121 or Ser-122; C2 is phosphorylated at 2 or 3 sites among Ser-135, Ser-139 and Ser-140. Hydroxyproline and citrulline are present but were not identified in either C1, C2 or C3, which suggests their presence in C8.

It localises to the myelin membrane. This protein may function to maintain proper structure of myelin. The polypeptide is Myelin basic protein (MBP) (Squalus acanthias (Spiny dogfish)).